The following is a 53-amino-acid chain: UPF0391 membrane protein ECA0470 (53 aa).

2 helical membrane-spanning segments follow: residues 4 to 24 (WGII…GGLA) and 30 to 47 (AAKI…VSLF).

The protein belongs to the UPF0391 family.

It localises to the cell membrane. This Pectobacterium atrosepticum (strain SCRI 1043 / ATCC BAA-672) (Erwinia carotovora subsp. atroseptica) protein is UPF0391 membrane protein ECA0470.